Reading from the N-terminus, the 354-residue chain is Probable cinnamyl alcohol dehydrogenase 1 (354 aa).

Residues Cys47, His69, Glu70, Cys100, Cys103, Cys106, Cys114, and Cys163 each coordinate Zn(2+). NADP(+) is bound by residues Thr167, 188–193 (GLGGLG), 211–216 (STSESK), Thr251, and 297–299 (SVT).

Belongs to the zinc-containing alcohol dehydrogenase family. Homodimer. It depends on Zn(2+) as a cofactor.

It carries out the reaction (E)-cinnamyl alcohol + NADP(+) = (E)-cinnamaldehyde + NADPH + H(+). The enzyme catalyses (E)-coniferol + NADP(+) = (E)-coniferaldehyde + NADPH + H(+). It catalyses the reaction (E)-sinapyl alcohol + NADP(+) = (E)-sinapaldehyde + NADPH + H(+). The catalysed reaction is (E)-4-coumaroyl alcohol + NADP(+) = (E)-4-coumaraldehyde + NADPH + H(+). It carries out the reaction (E)-caffeyl alcohol + NADP(+) = (E)-caffeyl aldehyde + NADPH + H(+). The protein operates within aromatic compound metabolism; phenylpropanoid biosynthesis. In terms of biological role, involved in lignin biosynthesis. Catalyzes the final step specific for the production of lignin monomers. Catalyzes the NADPH-dependent reduction of coniferaldehyde, 5-hydroxyconiferaldehyde, sinapaldehyde, 4-coumaraldehyde and caffeyl aldehyde to their respective alcohols. The protein is Probable cinnamyl alcohol dehydrogenase 1 of Oryza sativa subsp. japonica (Rice).